We begin with the raw amino-acid sequence, 414 residues long: Glucose-1-phosphate adenylyltransferase (414 aa).

Alpha-D-glucose 1-phosphate-binding positions include Gly164, 181–182 (EK), and Ser199.

This sequence belongs to the bacterial/plant glucose-1-phosphate adenylyltransferase family. In terms of assembly, homotetramer.

The catalysed reaction is alpha-D-glucose 1-phosphate + ATP + H(+) = ADP-alpha-D-glucose + diphosphate. It functions in the pathway glycan biosynthesis; glycogen biosynthesis. Its function is as follows. Involved in the biosynthesis of ADP-glucose, a building block required for the elongation reactions to produce glycogen. Catalyzes the reaction between ATP and alpha-D-glucose 1-phosphate (G1P) to produce pyrophosphate and ADP-Glc. The chain is Glucose-1-phosphate adenylyltransferase from Kocuria rhizophila (strain ATCC 9341 / DSM 348 / NBRC 103217 / DC2201).